We begin with the raw amino-acid sequence, 307 residues long: Aspartate carbamoyltransferase catalytic subunit (307 aa).

Carbamoyl phosphate is bound by residues Arg54 and Thr55. Position 83 (Lys83) interacts with L-aspartate. Positions 104, 132, and 135 each coordinate carbamoyl phosphate. L-aspartate-binding residues include Arg165 and Arg228. Leu267 and Pro268 together coordinate carbamoyl phosphate.

Belongs to the aspartate/ornithine carbamoyltransferase superfamily. ATCase family. Heterododecamer (2C3:3R2) of six catalytic PyrB chains organized as two trimers (C3), and six regulatory PyrI chains organized as three dimers (R2).

It carries out the reaction carbamoyl phosphate + L-aspartate = N-carbamoyl-L-aspartate + phosphate + H(+). It participates in pyrimidine metabolism; UMP biosynthesis via de novo pathway; (S)-dihydroorotate from bicarbonate: step 2/3. Functionally, catalyzes the condensation of carbamoyl phosphate and aspartate to form carbamoyl aspartate and inorganic phosphate, the committed step in the de novo pyrimidine nucleotide biosynthesis pathway. This Clostridium acetobutylicum (strain ATCC 824 / DSM 792 / JCM 1419 / IAM 19013 / LMG 5710 / NBRC 13948 / NRRL B-527 / VKM B-1787 / 2291 / W) protein is Aspartate carbamoyltransferase catalytic subunit.